The chain runs to 358 residues: Chorismate synthase (358 aa).

Arg-46 is an NADP(+) binding site. FMN is bound by residues 123 to 125 (RSS), 235 to 236 (NA), Gly-275, 290 to 294 (KPTPS), and Arg-316.

The protein belongs to the chorismate synthase family. Homotetramer. It depends on FMNH2 as a cofactor.

The catalysed reaction is 5-O-(1-carboxyvinyl)-3-phosphoshikimate = chorismate + phosphate. The protein operates within metabolic intermediate biosynthesis; chorismate biosynthesis; chorismate from D-erythrose 4-phosphate and phosphoenolpyruvate: step 7/7. In terms of biological role, catalyzes the anti-1,4-elimination of the C-3 phosphate and the C-6 proR hydrogen from 5-enolpyruvylshikimate-3-phosphate (EPSP) to yield chorismate, which is the branch point compound that serves as the starting substrate for the three terminal pathways of aromatic amino acid biosynthesis. This reaction introduces a second double bond into the aromatic ring system. The chain is Chorismate synthase from Helicobacter hepaticus (strain ATCC 51449 / 3B1).